Reading from the N-terminus, the 207-residue chain is Carbonic anhydrase 2 (207 aa).

Residues cysteine 51, aspartate 53, histidine 104, and cysteine 107 each coordinate Zn(2+).

It belongs to the beta-class carbonic anhydrase family. Requires Zn(2+) as cofactor.

It carries out the reaction hydrogencarbonate + H(+) = CO2 + H2O. In terms of biological role, catalyzes the reversible hydration of carbon dioxide to form bicarbonate. This is Carbonic anhydrase 2 (mtcA2) from Mycobacterium tuberculosis (strain CDC 1551 / Oshkosh).